We begin with the raw amino-acid sequence, 206 residues long: MGGKWSKSSVVGWPAVRERMRRAEPAADGVGAASRDLEKHGAITSSNTAANNAACAWLEAQEEEKVGFPVTPQVPLRPMTYKAAVDLSHFLKEKGGLEGLIHSQRRQDILDLWIYHTQGYFPDWQNYTPGPGIRYPLTFGWRYKLVPVEPEKLEEANKGENTSLLHPVSLHGMDDPEREVLEWRFDSRLAFHHVARELHPEYFKNC.

A lipid anchor (N-myristoyl glycine; by host) is attached at Gly-2. Ser-6 carries the phosphoserine; by host modification. The interval Glu-62–Lys-65 is acidic; interacts with host PACS1 and PACS2; stabilizes the interaction of NEF/MHC-I with host AP1M1; necessary for MHC-I internalization. Residues Pro-69–Pro-78 form an SH3-binding; interaction with Src family tyrosine kinases region. Residues Pro-72–Pro-75 carry the PxxP; stabilizes the interaction of NEF/MHC-I with host AP1M1; necessary for MHC-I internalization motif. The interval Asp-108–Trp-124 is mediates dimerization, Nef-PTE1 interaction. The tract at residues Val-148 to Val-180 is binding to ATP6V1H. The Dileucine internalization motif; necessary for CD4 internalization motif lies at Leu-164–Leu-165. Positions Asp-174–Asp-175 match the Diacidic; necessary for CD4 internalization motif.

It belongs to the lentivirus primate group Nef protein family. In terms of assembly, monomer; cytosolic form. Homodimer; membrane bound form. Interacts with Nef associated p21-activated kinase (PAK2); this interaction activates PAK2. Associates with the Nef-MHC-I-AP1 complex; this complex is required for MHC-I internalization. Interacts (via C-terminus) with host PI3-kinase. Interacts with host PACS1; this interaction seems to be weak. Interacts with host PACS2. Interacts with host LCK and MAPK3; these interactions inhibit the kinase activity of the latter. Interacts with host ATP6V1H; this interaction may play a role in CD4 endocytosis. Associates with the CD4-Nef-AP2 complex; this complex is required for CD4 internalization. Interacts with host AP2 subunit alpha and AP2 subunit sigma2. Interacts with TCR-zeta chain; this interaction up-regulates the Fas ligand (FasL) surface expression. Interacts with host HCK, LYN, and SRC; these interactions activate the Src family kinases. Interacts with MAP3K5; this interaction inhibits the Fas and TNFR-mediated death signals. Interacts with beta-COP and PTE1. Interacts with human RACK1; this increases Nef phosphorylation by PKC. Interacts with TP53; this interaction decreases the half-life of TP53, protecting the infected cell against p53-mediated apoptosis. In terms of processing, the virion-associated Nef proteins are cleaved by the viral protease to release the soluble C-terminal core protein. Nef is probably cleaved concomitantly with viral structural proteins on maturation of virus particles. Post-translationally, myristoylated. Phosphorylated on serine residues, probably by host PKCdelta and theta.

The protein localises to the host cell membrane. The protein resides in the virion. Its subcellular location is the secreted. It is found in the host Golgi apparatus membrane. Functionally, factor of infectivity and pathogenicity, required for optimal virus replication. Alters numerous pathways of T-lymphocyte function and down-regulates immunity surface molecules in order to evade host defense and increase viral infectivity. Alters the functionality of other immunity cells, like dendritic cells, monocytes/macrophages and NK cells. In terms of biological role, in infected CD4(+) T-lymphocytes, down-regulates the surface MHC-I, mature MHC-II, CD4, CD28, CCR5 and CXCR4 molecules. Mediates internalization and degradation of host CD4 through the interaction of with the cytoplasmic tail of CD4, the recruitment of AP-2 (clathrin adapter protein complex 2), internalization through clathrin coated pits, and subsequent transport to endosomes and lysosomes for degradation. Diverts host MHC-I molecules to the trans-Golgi network-associated endosomal compartments by an endocytic pathway to finally target them for degradation. MHC-I down-regulation may involve AP-1 (clathrin adapter protein complex 1) or possibly Src family kinase-ZAP70/Syk-PI3K cascade recruited by PACS2. In consequence infected cells are masked for immune recognition by cytotoxic T-lymphocytes. Decreasing the number of immune receptors also prevents reinfection by more HIV particles (superinfection). Down-regulates host SERINC3 and SERINC5 thereby excluding these proteins from the viral particles. Virion infectivity is drastically higher when SERINC3 or SERINC5 are excluded from the viral envelope, because these host antiviral proteins impair the membrane fusion event necessary for subsequent virion penetration. Bypasses host T-cell signaling by inducing a transcriptional program nearly identical to that of anti-CD3 cell activation. Interaction with TCR-zeta chain up-regulates the Fas ligand (FasL). Increasing surface FasL molecules and decreasing surface MHC-I molecules on infected CD4(+) cells send attacking cytotoxic CD8+ T-lymphocytes into apoptosis. Its function is as follows. Plays a role in optimizing the host cell environment for viral replication without causing cell death by apoptosis. Protects the infected cells from apoptosis in order to keep them alive until the next virus generation is ready to strike. Inhibits the Fas and TNFR-mediated death signals by blocking MAP3K5/ASK1. Decreases the half-life of TP53, protecting the infected cell against p53-mediated apoptosis. Inhibits the apoptotic signals regulated by the Bcl-2 family proteins through the formation of a Nef/PI3-kinase/PAK2 complex that leads to activation of PAK2 and induces phosphorylation of host BAD. Functionally, extracellular Nef protein targets CD4(+) T-lymphocytes for apoptosis by interacting with CXCR4 surface receptors. This is Protein Nef from Homo sapiens (Human).